The chain runs to 289 residues: Ribosomal protein L11 methyltransferase (289 aa).

Residues Thr-142, Gly-163, Asp-185, and Asn-226 each coordinate S-adenosyl-L-methionine.

Belongs to the methyltransferase superfamily. PrmA family.

Its subcellular location is the cytoplasm. It catalyses the reaction L-lysyl-[protein] + 3 S-adenosyl-L-methionine = N(6),N(6),N(6)-trimethyl-L-lysyl-[protein] + 3 S-adenosyl-L-homocysteine + 3 H(+). In terms of biological role, methylates ribosomal protein L11. This Legionella pneumophila (strain Corby) protein is Ribosomal protein L11 methyltransferase.